Consider the following 194-residue polypeptide: Protein GrpE 1 (194 aa).

The disordered stretch occupies residues 1–22; it reads MIHNEEEQLEKKIEKNQDPKIN.

Belongs to the GrpE family. Homodimer.

Its subcellular location is the cytoplasm. Participates actively in the response to hyperosmotic and heat shock by preventing the aggregation of stress-denatured proteins, in association with DnaK and GrpE. It is the nucleotide exchange factor for DnaK and may function as a thermosensor. Unfolded proteins bind initially to DnaJ; upon interaction with the DnaJ-bound protein, DnaK hydrolyzes its bound ATP, resulting in the formation of a stable complex. GrpE releases ADP from DnaK; ATP binding to DnaK triggers the release of the substrate protein, thus completing the reaction cycle. Several rounds of ATP-dependent interactions between DnaJ, DnaK and GrpE are required for fully efficient folding. The protein is Protein GrpE 1 of Buchnera aphidicola subsp. Acyrthosiphon pisum (strain APS) (Acyrthosiphon pisum symbiotic bacterium).